Consider the following 105-residue polypeptide: Putative pterin-4-alpha-carbinolamine dehydratase (105 aa).

This sequence belongs to the pterin-4-alpha-carbinolamine dehydratase family.

The catalysed reaction is (4aS,6R)-4a-hydroxy-L-erythro-5,6,7,8-tetrahydrobiopterin = (6R)-L-erythro-6,7-dihydrobiopterin + H2O. This chain is Putative pterin-4-alpha-carbinolamine dehydratase, found in Sinorhizobium medicae (strain WSM419) (Ensifer medicae).